The chain runs to 339 residues: Methionine import ATP-binding protein MetN 2 (339 aa).

Positions 2-241 constitute an ABC transporter domain; that stretch reads ISFNNVSKVY…PKTKTTQNFV (240 aa). ATP is bound at residue 38 to 45; it reads GFSGAGKS.

Belongs to the ABC transporter superfamily. Methionine importer (TC 3.A.1.24) family. In terms of assembly, the complex is composed of two ATP-binding proteins (MetN), two transmembrane proteins (MetI) and a solute-binding protein (MetQ).

It is found in the cell membrane. It carries out the reaction L-methionine(out) + ATP + H2O = L-methionine(in) + ADP + phosphate + H(+). The enzyme catalyses D-methionine(out) + ATP + H2O = D-methionine(in) + ADP + phosphate + H(+). Its function is as follows. Part of the ABC transporter complex MetNIQ involved in methionine import. Responsible for energy coupling to the transport system. The chain is Methionine import ATP-binding protein MetN 2 from Bacillus cereus (strain ZK / E33L).